The following is a 316-amino-acid chain: MSEDLKQIAQETESLRKVAFFGIAVSTIATLTAIIAVPMLYNYMQHVQSSLQSEVEFCQHRSNGLWDEYKRFQGVSGVEGRIKRDAYHRSLGVSGASRKARRQSYGNDAAVGGFGGSSGGSCCSCGSGAAGPAGSPGQDGAPGNDGAPGAPGNPGQDASEDQTAGPDSFCFDCPAGPPGPSGAPGQKGPSGAPGAPGQSGGAALPGPPGPAGPPGPAGQPGSNGNAGAPGAPGQVVDVPGTPGPAGPPGSPGPAGAPGQPGQAGSSQPGGPGPQGDAGAPGAPGAPGQAGAPGQDGESGSEGACDHCPPPRTAPGY.

Positions 1-36 (MSEDLKQIAQETESLRKVAFFGIAVSTIATLTAIIA) are cleaved as a signal peptide. 2 stretches are compositionally biased toward low complexity: residues 127–157 (SGAA…PGQD) and 183–204 (APGQ…GAAL). Positions 127-316 (SGAAGPAGSP…CPPPRTAPGY (190 aa)) are disordered. Triple-helical region regions lie at residues 128-157 (GAAG…PGQD), 176-202 (GPPG…SGGA), 206-235 (GPPG…PGQV), 240-266 (GTPG…AGSS), and 269-304 (GGPG…EGAC). Residues 205-217 (PGPPGPAGPPGPA) show a composition bias toward pro residues. Low complexity predominate over residues 219-234 (QPGSNGNAGAPGAPGQ). The segment covering 241–251 (TPGPAGPPGSP) has biased composition (pro residues). Composition is skewed to low complexity over residues 256–266 (APGQPGQAGSS) and 276–295 (DAGA…PGQD). Positions 307–316 (CPPPRTAPGY) are enriched in pro residues.

Belongs to the cuticular collagen family. As to quaternary structure, collagen polypeptide chains are complexed within the cuticle by disulfide bonds and other types of covalent cross-links.

Nematode cuticles are composed largely of collagen-like proteins. The cuticle functions both as an exoskeleton and as a barrier to protect the worm from its environment. The protein is Cuticle collagen 13 (col-13) of Caenorhabditis elegans.